The chain runs to 338 residues: Cytoskeleton protein RodZ (338 aa).

Over 1–111 (MNTEASQDQT…LGKKHKKRDG (111 aa)) the chain is Cytoplasmic. In terms of domain architecture, HTH cro/C1-type spans 19–79 (LRQAREALGL…KLVHLPEDEL (61 aa)). Positions 30-49 (QQMVAERLCLKVSTIRDIEE) form a DNA-binding region, H-T-H motif. A helical; Signal-anchor for type II membrane protein membrane pass occupies residues 112 to 132 (WLMSFTWLIVLVVLGLTGAWW). Residues 133–338 (WQNHQAQQAE…RVARLTVGVE (206 aa)) lie on the Periplasmic side of the membrane. Composition is skewed to polar residues over residues 151–163 (SAQL…QSVP) and 180–195 (PVAN…NGTV). The tract at residues 151 to 253 (SAQLSQNGGQ…LPTADAGVTG (103 aa)) is disordered. Positions 196–209 (PATSSAAPADTANN) are enriched in low complexity. Residues 210–241 (GVNTTAPQGTTSAESAVVSPSQAPLPSVSTAQ) show a composition bias toward polar residues.

Belongs to the RodZ family.

The protein resides in the cell inner membrane. Cytoskeletal protein that is involved in cell-shape control through regulation of the length of the long axis. This Yersinia enterocolitica serotype O:8 / biotype 1B (strain NCTC 13174 / 8081) protein is Cytoskeleton protein RodZ.